A 197-amino-acid chain; its full sequence is NADH-quinone oxidoreductase subunit B (197 aa).

4 residues coordinate [4Fe-4S] cluster: cysteine 76, cysteine 77, cysteine 141, and cysteine 171.

Belongs to the complex I 20 kDa subunit family. NDH-1 is composed of 14 different subunits. Subunits NuoB, C, D, E, F, and G constitute the peripheral sector of the complex. It depends on [4Fe-4S] cluster as a cofactor.

It localises to the cell inner membrane. The catalysed reaction is a quinone + NADH + 5 H(+)(in) = a quinol + NAD(+) + 4 H(+)(out). Functionally, NDH-1 shuttles electrons from NADH, via FMN and iron-sulfur (Fe-S) centers, to quinones in the respiratory chain. The immediate electron acceptor for the enzyme in this species is believed to be ubiquinone. Couples the redox reaction to proton translocation (for every two electrons transferred, four hydrogen ions are translocated across the cytoplasmic membrane), and thus conserves the redox energy in a proton gradient. The chain is NADH-quinone oxidoreductase subunit B from Methylobacterium nodulans (strain LMG 21967 / CNCM I-2342 / ORS 2060).